The sequence spans 338 residues: Ketol-acid reductoisomerase (NADP(+)) (338 aa).

Residues 1-181 (MKVFYDKDAD…GGGRAGIIET (181 aa)) form the KARI N-terminal Rossmann domain. NADP(+)-binding positions include 24-27 (YGSQ), Arg-47, and Ser-52. Residue His-107 is part of the active site. An NADP(+)-binding site is contributed by Gly-133. The KARI C-terminal knotted domain occupies 182–327 (NFREETETDL…EKLRAMMPWI (146 aa)). Mg(2+) contacts are provided by Asp-190, Glu-194, Glu-226, and Glu-230. Ser-251 is a substrate binding site.

It belongs to the ketol-acid reductoisomerase family. It depends on Mg(2+) as a cofactor.

It carries out the reaction (2R)-2,3-dihydroxy-3-methylbutanoate + NADP(+) = (2S)-2-acetolactate + NADPH + H(+). It catalyses the reaction (2R,3R)-2,3-dihydroxy-3-methylpentanoate + NADP(+) = (S)-2-ethyl-2-hydroxy-3-oxobutanoate + NADPH + H(+). Its pathway is amino-acid biosynthesis; L-isoleucine biosynthesis; L-isoleucine from 2-oxobutanoate: step 2/4. It participates in amino-acid biosynthesis; L-valine biosynthesis; L-valine from pyruvate: step 2/4. In terms of biological role, involved in the biosynthesis of branched-chain amino acids (BCAA). Catalyzes an alkyl-migration followed by a ketol-acid reduction of (S)-2-acetolactate (S2AL) to yield (R)-2,3-dihydroxy-isovalerate. In the isomerase reaction, S2AL is rearranged via a Mg-dependent methyl migration to produce 3-hydroxy-3-methyl-2-ketobutyrate (HMKB). In the reductase reaction, this 2-ketoacid undergoes a metal-dependent reduction by NADPH to yield (R)-2,3-dihydroxy-isovalerate. The sequence is that of Ketol-acid reductoisomerase (NADP(+)) from Cupriavidus taiwanensis (strain DSM 17343 / BCRC 17206 / CCUG 44338 / CIP 107171 / LMG 19424 / R1) (Ralstonia taiwanensis (strain LMG 19424)).